The chain runs to 112 residues: uncharacterized protein (112 aa).

The HTH cro/C1-type domain occupies 6-60 (LRQLRKAHKLTMEQLAEKIGIAKSSYGGYEAESKKPPLDKLVILARLYDVSVDYI). Positions 17-36 (MEQLAEKIGIAKSSYGGYEA) form a DNA-binding region, H-T-H motif.

This is an uncharacterized protein from Bacillus subtilis (strain 168).